Consider the following 138-residue polypeptide: Nucleoside diphosphate kinase (138 aa).

Lys10, Phe58, Arg86, Thr92, Arg103, and Asn113 together coordinate ATP. The Pros-phosphohistidine intermediate role is filled by His116.

Belongs to the NDK family. In terms of assembly, homotetramer. It depends on Mg(2+) as a cofactor.

The protein resides in the cytoplasm. The catalysed reaction is a 2'-deoxyribonucleoside 5'-diphosphate + ATP = a 2'-deoxyribonucleoside 5'-triphosphate + ADP. It catalyses the reaction a ribonucleoside 5'-diphosphate + ATP = a ribonucleoside 5'-triphosphate + ADP. Major role in the synthesis of nucleoside triphosphates other than ATP. The ATP gamma phosphate is transferred to the NDP beta phosphate via a ping-pong mechanism, using a phosphorylated active-site intermediate. This Actinobacillus pleuropneumoniae serotype 7 (strain AP76) protein is Nucleoside diphosphate kinase.